Reading from the N-terminus, the 107-residue chain is Large ribosomal subunit protein uL18c (107 aa).

Belongs to the universal ribosomal protein uL18 family. Part of the 50S ribosomal subunit; contacts the 5S rRNA.

It is found in the plastid. It localises to the chloroplast. Binds 5S rRNA, forms part of the central protuberance of the 50S subunit. This chain is Large ribosomal subunit protein uL18c (rpl18), found in Guillardia theta (Cryptophyte).